A 335-amino-acid polypeptide reads, in one-letter code: Ketol-acid reductoisomerase (NADP(+)) (335 aa).

Residues 5-185 (SKIYTDKDSN…GATRAGVIPT (181 aa)) form the KARI N-terminal Rossmann domain. Residues 28–31 (YGSQ), Ser56, and 86–89 (DMVQ) each bind NADP(+). His111 is a catalytic residue. An NADP(+)-binding site is contributed by Gly137. The 146-residue stretch at 186–331 (TFKEETETDL…NQLKDLIQKG (146 aa)) folds into the KARI C-terminal knotted domain. Positions 194, 198, 230, and 234 each coordinate Mg(2+). Ser255 contacts substrate.

This sequence belongs to the ketol-acid reductoisomerase family. Mg(2+) serves as cofactor.

It catalyses the reaction (2R)-2,3-dihydroxy-3-methylbutanoate + NADP(+) = (2S)-2-acetolactate + NADPH + H(+). The catalysed reaction is (2R,3R)-2,3-dihydroxy-3-methylpentanoate + NADP(+) = (S)-2-ethyl-2-hydroxy-3-oxobutanoate + NADPH + H(+). It functions in the pathway amino-acid biosynthesis; L-isoleucine biosynthesis; L-isoleucine from 2-oxobutanoate: step 2/4. It participates in amino-acid biosynthesis; L-valine biosynthesis; L-valine from pyruvate: step 2/4. Involved in the biosynthesis of branched-chain amino acids (BCAA). Catalyzes an alkyl-migration followed by a ketol-acid reduction of (S)-2-acetolactate (S2AL) to yield (R)-2,3-dihydroxy-isovalerate. In the isomerase reaction, S2AL is rearranged via a Mg-dependent methyl migration to produce 3-hydroxy-3-methyl-2-ketobutyrate (HMKB). In the reductase reaction, this 2-ketoacid undergoes a metal-dependent reduction by NADPH to yield (R)-2,3-dihydroxy-isovalerate. This is Ketol-acid reductoisomerase (NADP(+)) from Saccharolobus islandicus (strain L.S.2.15 / Lassen #1) (Sulfolobus islandicus).